Reading from the N-terminus, the 265-residue chain is Chanoclavine-I dehydrogenase easD (265 aa).

An N-terminal signal peptide occupies residues 1–20 (MSFVSSKIFAITGGASGIGA). Residues Ile-18, Asp-66, Arg-132, Tyr-169, Lys-173, and Thr-205 each contribute to the NADP(+) site. Tyr-169 (proton donor) is an active-site residue. Lys-173 acts as the Lowers pKa of active site Tyr in catalysis.

Belongs to the short-chain dehydrogenases/reductases (SDR) family. In terms of assembly, homotetramer.

It catalyses the reaction chanoclavine-I + NAD(+) = chanoclavine-I aldehyde + NADH + H(+). It functions in the pathway alkaloid biosynthesis; ergot alkaloid biosynthesis. Chanoclavine-I dehydrogenase; part of the gene cluster that mediates the biosynthesis of fungal ergot alkaloid. DmaW catalyzes the first step of ergot alkaloid biosynthesis by condensing dimethylallyl diphosphate (DMAP) and tryptophan to form 4-dimethylallyl-L-tryptophan. The second step is catalyzed by the methyltransferase easF that methylates 4-dimethylallyl-L-tryptophan in the presence of S-adenosyl-L-methionine, resulting in the formation of 4-dimethylallyl-L-abrine. The catalase easC and the FAD-dependent oxidoreductase easE then transform 4-dimethylallyl-L-abrine to chanoclavine-I which is further oxidized by easD in the presence of NAD(+), resulting in the formation of chanoclavine-I aldehyde. Chanoclavine-I aldehyde is the precursor of ergoamides and ergopeptines in Clavicipitaceae, and clavine-type alcaloids such as fumiclavine in Trichocomaceae. However, the metabolites downstream of chanoclavine-I aldehyde in Arthrodermataceae have not been identified yet. This is Chanoclavine-I dehydrogenase easD from Trichophyton verrucosum (strain HKI 0517).